The primary structure comprises 328 residues: DNA-directed RNA polymerase subunit alpha (328 aa).

Positions 1-232 (MSTQGFLKPR…DQISVFAALE (232 aa)) are alpha N-terminal domain (alpha-NTD). The alpha C-terminal domain (alpha-CTD) stretch occupies residues 248–328 (IDPVLLRPVD…NWPPLGLERP (81 aa)).

It belongs to the RNA polymerase alpha chain family. As to quaternary structure, homodimer. The RNAP catalytic core consists of 2 alpha, 1 beta, 1 beta' and 1 omega subunit. When a sigma factor is associated with the core the holoenzyme is formed, which can initiate transcription.

The catalysed reaction is RNA(n) + a ribonucleoside 5'-triphosphate = RNA(n+1) + diphosphate. Functionally, DNA-dependent RNA polymerase catalyzes the transcription of DNA into RNA using the four ribonucleoside triphosphates as substrates. The polypeptide is DNA-directed RNA polymerase subunit alpha (Bordetella petrii (strain ATCC BAA-461 / DSM 12804 / CCUG 43448)).